A 265-amino-acid polypeptide reads, in one-letter code: Undecaprenyl-diphosphatase (265 aa).

The next 7 helical transmembrane spans lie at 42–62 (AATF…VLYW), 82–102 (GIML…AAHS), 108–128 (LFTP…MLLV), 143–163 (MSPA…WPGF), 181–201 (GLAA…ATGY), 221–241 (GFVV…ALVG), and 248–264 (FAWY…YFMA).

The protein belongs to the UppP family.

Its subcellular location is the cell inner membrane. The catalysed reaction is di-trans,octa-cis-undecaprenyl diphosphate + H2O = di-trans,octa-cis-undecaprenyl phosphate + phosphate + H(+). Catalyzes the dephosphorylation of undecaprenyl diphosphate (UPP). Confers resistance to bacitracin. The polypeptide is Undecaprenyl-diphosphatase (Nitratidesulfovibrio vulgaris (strain DP4) (Desulfovibrio vulgaris)).